Here is a 148-residue protein sequence, read N- to C-terminus: Large ribosomal subunit protein bL9 (148 aa).

Belongs to the bacterial ribosomal protein bL9 family.

Its function is as follows. Binds to the 23S rRNA. The protein is Large ribosomal subunit protein bL9 of Clostridium beijerinckii (strain ATCC 51743 / NCIMB 8052) (Clostridium acetobutylicum).